The chain runs to 569 residues: Melanophilin (569 aa).

The RabBD domain occupies 4–124; sequence KLDLSKLTDD…MGSLEWYYGH (121 aa). The FYVE-type zinc finger occupies 58-112; that stretch reads HLNETHCARCLQPYRLLVAPKRQCLDCHLFTCQDCSHAHPEEEGWLCDPCHLARV. The tract at residues 143 to 430 is disordered; that stretch reads GRLQGGGGPE…MQPGRTTDQE (288 aa). 2 stretches are compositionally biased toward basic and acidic residues: residues 352-362 and 379-390; these read ETLKRKLEEMT and EEEAGLNRKTSI. Polar residues predominate over residues 404–415; it reads SGQTSRQETSPR. A coiled-coil region spans residues 431–465; the sequence is LLELEDRVAVTASEVQQVESEVSNIKSKIAALQAA. Positions 490–569 are disordered; it reads GRLGQTPKDP…FAKPVMTQRP (80 aa). Residues 526-535 are compositionally biased toward basic and acidic residues; it reads SQDKAGDSFD.

Binds RAB27A that has been activated by GTP-binding via its N-terminus. Binds MYO5A via its C-terminal coiled coil domain.

The protein localises to the melanosome. Its function is as follows. Rab effector protein involved in melanosome transport. Serves as link between melanosome-bound RAB27A and the motor protein MYO5A. This Felis catus (Cat) protein is Melanophilin (MLPH).